We begin with the raw amino-acid sequence, 120 residues long: MEYHCQKGLNQGSRRSRRRLKYTLILSSGSPRDSMMQTNESSLLSKVGMTWLHQSVMLNLQSPDWKALSEPSKQLSMDLIRVLPSWVLEWDNLRQDLQSYALITTISLREWILQNVTLDH.

Belongs to the orthoreovirus sigma-1s protein family.

The protein is Protein sigma-1-small (S1) of Mammalia (T3D).